The primary structure comprises 194 residues: AN1-type zinc finger protein 2A (194 aa).

2 consecutive AN1-type zinc fingers follow at residues 4–52 (PDLG…QKDV) and 94–142 (KIFT…RPTI). The Zn(2+) site is built by C10, C15, C25, C28, C33, H36, H42, C44, C100, C105, C115, C118, C123, H126, H132, and C134. The segment at 145–164 (GCSPVTASESKPSGDPHPGS) is disordered.

It localises to the cytoplasm. The protein localises to the nucleus. In Pongo abelii (Sumatran orangutan), this protein is AN1-type zinc finger protein 2A (ZFAND2A).